Here is a 360-residue protein sequence, read N- to C-terminus: Peptide chain release factor 1 (360 aa).

Gln-235 is subject to N5-methylglutamine.

This sequence belongs to the prokaryotic/mitochondrial release factor family. Post-translationally, methylated by PrmC. Methylation increases the termination efficiency of RF1.

The protein resides in the cytoplasm. Functionally, peptide chain release factor 1 directs the termination of translation in response to the peptide chain termination codons UAG and UAA. The polypeptide is Peptide chain release factor 1 (Burkholderia vietnamiensis (strain G4 / LMG 22486) (Burkholderia cepacia (strain R1808))).